The sequence spans 255 residues: Taurine import ATP-binding protein TauB (255 aa).

Residues 2 to 229 (LNVSGLWAEY…RYAEGEPCRA (228 aa)) form the ABC transporter domain. 34 to 41 (GPSGCGKT) contributes to the ATP binding site.

The protein belongs to the ABC transporter superfamily. Taurine importer (TC 3.A.1.17.1) family. In terms of assembly, the complex is composed of two ATP-binding proteins (TauB), two transmembrane proteins (TauC) and a solute-binding protein (TauA).

It localises to the cell inner membrane. It carries out the reaction taurine(out) + ATP + H2O = taurine(in) + ADP + phosphate + H(+). Functionally, part of the ABC transporter complex TauABC involved in taurine import. Responsible for energy coupling to the transport system. The polypeptide is Taurine import ATP-binding protein TauB (Yersinia pestis bv. Antiqua (strain Antiqua)).